Reading from the N-terminus, the 75-residue chain is uncharacterized protein (75 aa).

The signal sequence occupies residues 1–19; the sequence is MQCVCLCVFVLLLAGCVTS.

As to expression, nacreous layer of shell (at protein level).

The protein localises to the secreted. This is an uncharacterized protein from Margaritifera margaritifera (Freshwater pearl mussel).